The chain runs to 788 residues: Cyclin-F (788 aa).

A Nuclear localization signal 1 motif is present at residues 20–28 (KRRIRRRPR). The region spanning 29–76 (NLTILNLPEDALFHILKWLSVGDILAVRAVHSHLKYLVDNHASVWACA) is the F-box domain. One can recognise a Cyclin N-terminal domain in the interval 291–405 (HAVNKQRVFS…EVVSALDGKI (115 aa)). 4 consecutive short sequence motifs (d box) follow at residues 310–313 (RYIL), 343–346 (RRRL), 349–352 (RYRL), and 351–354 (RLQL). Disordered stretches follow at residues 566 to 585 (SARR…RGSF) and 700 to 788 (TSGY…FLKL). Residues 568–574 (RRTKRKR) carry the Nuclear localization signal 2 motif. A PEST region spans residues 582 to 766 (RGSFVTTPTA…ESCAPQQQVK (185 aa)). 2 stretches are compositionally biased toward polar residues: residues 700-716 (TSGY…DSGR) and 723-738 (RSTS…NTQP). A D box 5 motif is present at residues 767 to 770 (RKNL).

The protein belongs to the cyclin family. Cyclin AB subfamily. Component of the SCF(CCNF) complex consisting of CUL1, RBX1, SKP1 and CCNF. Interacts with SKP1. Interacts with CUL1. Interacts with CCNB1; interaction is required for nuclear localization of CCNB1. Interacts with CCP110; this interaction leads to CCP110 ubiquitination and degradation via the proteasome pathway. Interacts (via the Cyclin N-terminal domain) with MYBL2/BMYB. Interacts with FZR1/CDH1 (via N-terminus). Interacts with RRM2 (via Cy motif and when phosphorylated at 'Thr-33'); the interaction occurs exclusively in G2 and early M. Interacts with CDC6 (via Cy motif); the interaction takes place during G2 and M phase. In terms of processing, degraded when the spindle assembly checkpoint is activated during the G2-M transition. Degradation is not dependent on the proteasome or ubiquitin and depends on the C-terminal PEST sequence. Post-translationally, phosphorylated just before cells enter into mitosis. Ubiquitinated by the anaphase-promoting complex (APC/C); leading to its degradation by the proteasome.

Its subcellular location is the nucleus. The protein resides in the cytoplasm. It localises to the perinuclear region. The protein localises to the cytoskeleton. It is found in the microtubule organizing center. Its subcellular location is the centrosome. The protein resides in the centriole. Substrate recognition component of a SCF (SKP1-CUL1-F-box protein) E3 ubiquitin-protein ligase complex which mediates the ubiquitination and subsequent proteasomal degradation of target proteins. The SCF(CCNF) E3 ubiquitin-protein ligase complex is an integral component of the ubiquitin proteasome system (UPS) and links proteasome degradation to the cell cycle. Mediates the substrate recognition and the proteasomal degradation of various target proteins involved in the regulation of cell cycle progression and in the maintenance of genome stability. Mediates the ubiquitination and subsequent proteasomal degradation of CP110 during G2 phase, thereby acting as an inhibitor of centrosome reduplication. In G2, mediates the ubiquitination and proteasomal degradation of CDC6, thereby suppressing DNA re-replication and preventing genome instability. Involved in the ubiquitination and degradation of the substrate adapter CDH1 of the anaphase-promoting complex (APC/C), thereby acting as an antagonist of APC/C in regulating G1 progression and S phase entry. May play a role in the G2 cell cycle checkpoint control after DNA damage, possibly by promoting the ubiquitination of MYBL2/BMYB. The protein is Cyclin-F (CCNF) of Bos taurus (Bovine).